Reading from the N-terminus, the 102-residue chain is Protein RnfH (102 aa).

The protein belongs to the UPF0125 (RnfH) family.

This is Protein RnfH from Haemophilus influenzae (strain 86-028NP).